The primary structure comprises 420 residues: Tyrosine--tRNA ligase (420 aa).

Residue Tyr-33 participates in L-tyrosine binding. The 'HIGH' region signature appears at 38–47 (PTGDSLHAGH). L-tyrosine contacts are provided by Tyr-167 and Gln-171. Residues 227 to 231 (KFGKS) carry the 'KMSKS' region motif. Lys-230 contributes to the ATP binding site. One can recognise an S4 RNA-binding domain in the interval 352 to 418 (PTIIDLLIGA…GKKNFAGVKY (67 aa)).

It belongs to the class-I aminoacyl-tRNA synthetase family. TyrS type 1 subfamily. Homodimer.

It localises to the cytoplasm. It catalyses the reaction tRNA(Tyr) + L-tyrosine + ATP = L-tyrosyl-tRNA(Tyr) + AMP + diphosphate + H(+). In terms of biological role, catalyzes the attachment of tyrosine to tRNA(Tyr) in a two-step reaction: tyrosine is first activated by ATP to form Tyr-AMP and then transferred to the acceptor end of tRNA(Tyr). The polypeptide is Tyrosine--tRNA ligase (Corynebacterium diphtheriae (strain ATCC 700971 / NCTC 13129 / Biotype gravis)).